Reading from the N-terminus, the 477-residue chain is Protein DETOXIFICATION 5 (477 aa).

The next 12 membrane-spanning stretches (helical) occupy residues 38 to 58, 72 to 92, 113 to 133, 146 to 166, 187 to 207, 211 to 231, 263 to 283, 292 to 312, 333 to 353, 376 to 396, 411 to 431, and 436 to 456; these read AAPM…SVMV, LATA…VGAL, FSAI…WFYM, ISKV…AQAV, AITT…AFGL, GAAL…ALYV, AAMT…SGLL, VLSI…GIGA, AVFA…TLLF, LSSL…LDGV, VVAY…WGHM, and LWIG…IVTA.

Belongs to the multi antimicrobial extrusion (MATE) (TC 2.A.66.1) family.

It is found in the membrane. This is Protein DETOXIFICATION 5 from Arabidopsis thaliana (Mouse-ear cress).